The following is a 187-amino-acid chain: MNLQHHFLIAMPALQDSVFKRSVVYICEHNEDGAMGLIINKPMDQFSVENVLEKLKIDPTPRDPAIRLDKPVFIGGPLADDRGFILHTPCSDFGSSISISEDTMITTSKDVLETLGTLKQPKNTLVALGYSAWENGQLEEELLENAWLTTPADKDILFHTPIAERWRAAARKLGIDIHNISTEAGHA.

The protein belongs to the UPF0301 (AlgH) family.

The protein is UPF0301 protein ECA3925 of Pectobacterium atrosepticum (strain SCRI 1043 / ATCC BAA-672) (Erwinia carotovora subsp. atroseptica).